Consider the following 116-residue polypeptide: Protein Wnt-5a (116 aa).

Serine 1 carries O-palmitoleoyl serine; by PORCN lipidation. 2 N-linked (GlcNAc...) asparagine glycosylation sites follow: asparagine 69 and asparagine 83. A disulfide bridge connects residues cysteine 82 and cysteine 97.

It belongs to the Wnt family. In terms of processing, palmitoleoylation is required for efficient binding to frizzled receptors. Depalmitoleoylation leads to Wnt signaling pathway inhibition.

The protein localises to the secreted. Its subcellular location is the extracellular space. It localises to the extracellular matrix. Ligand for members of the frizzled family of seven transmembrane receptors. Can activate or inhibit canonical Wnt signaling, depending on receptor context. Required during embryogenesis for extension of the primary anterior-posterior axis. This Meleagris gallopavo (Wild turkey) protein is Protein Wnt-5a (WNT5A).